A 479-amino-acid chain; its full sequence is MPSPSVTSPQVAVNDIGSAEDFLAAIDKTIKYFNDGDIVEGTIVKVDRDEVLLDIGYKTEGVIPSRELSIKHDVDPNEVVSVGDEVEALVLTKEDKEGRLILSKKRAQYERAWGTIEELKEKDEAVKGTVIEVVKGGLILDIGLRGFLPASLVEMRRVRDLQPYIGKEIEAKIIELDKNRNNVVLSRRAWLEQTQSEVRSEFLNQLQKGAIRKGVVSSIVNFGAFVDLGGVDGLVHVSELSWKHIDHPSEVVQVGDEVTVEVLDVDMDRERVSLSLKATQEDPWRHFARTHAIGQIVPGKVTKLVPFGAFVRVEEGIEGLVHISELSERHVEVPDQVVQVGDDAMVKVIDIDLERRRISLSLKQANEDYTEEFDPSKYGMADSYDEQGNYIFPEGFDPETNEWLEGFDKQREEWEARYAEAERRHKMHTAQMEKFAAAEAEAANAPVSNGSSRSEESSGGTLASDAQLAALREKLAGNA.

4 consecutive S1 motif domains span residues 36 to 105 (GDIV…LSKK), 123 to 188 (DEAV…LSRR), 209 to 277 (GAIR…LSLK), and 294 to 363 (GQIV…LSLK). Residues 429–466 (TAQMEKFAAAEAEAANAPVSNGSSRSEESSGGTLASDA) form a disordered region. Positions 437 to 460 (AAEAEAANAPVSNGSSRSEESSGG) are enriched in low complexity.

The protein belongs to the bacterial ribosomal protein bS1 family. Binds uncharacterized protein MSMEG_2731/MSMEI_2664.

Binds mRNA, facilitating recognition of most mRNAs by the 30S ribosomal subunit during translation initiation. Plays a role in trans-translation; binds tmRNA (the product of the ssrA gene). Binds very poorly to pyrazinoic acid (POA), the active form of the prodrug pyrazinamide (PZA); POA does not disrupt trans-translation in this organism. M.smegmatis is resistant to the antibiotic PZA. In trans-translation Ala-aminoacylated transfer-messenger RNA (tmRNA, product of the ssrA gene; the 2 termini fold to resemble tRNA(Ala) while it encodes a short internal open reading frame (the tag peptide)) acts like a tRNA, entering the A-site of the ribosome and displacing the stalled mRNA (which is subsequently degraded). The ribosome then switches to translate the ORF on the tmRNA, the nascent peptide is terminated with the 'tag peptide' encoded by the tmRNA and thus targeted for degradation. The chain is Small ribosomal subunit protein bS1 (rpsA) from Mycolicibacterium smegmatis (strain ATCC 700084 / mc(2)155) (Mycobacterium smegmatis).